The chain runs to 219 residues: Cytidylate kinase (219 aa).

15-23 (GPAASGKGT) provides a ligand contact to ATP.

The protein belongs to the cytidylate kinase family. Type 1 subfamily.

Its subcellular location is the cytoplasm. The catalysed reaction is CMP + ATP = CDP + ADP. It catalyses the reaction dCMP + ATP = dCDP + ADP. The polypeptide is Cytidylate kinase (Brucella melitensis biotype 1 (strain ATCC 23456 / CCUG 17765 / NCTC 10094 / 16M)).